Here is a 150-residue protein sequence, read N- to C-terminus: Transcription antitermination protein NusB (150 aa).

The protein belongs to the NusB family.

Its function is as follows. Involved in transcription antitermination. Required for transcription of ribosomal RNA (rRNA) genes. Binds specifically to the boxA antiterminator sequence of the ribosomal RNA (rrn) operons. This Streptococcus pyogenes serotype M2 (strain MGAS10270) protein is Transcription antitermination protein NusB.